A 98-amino-acid chain; its full sequence is UPF0251 protein Sputw3181_3483 (98 aa).

Belongs to the UPF0251 family.

The polypeptide is UPF0251 protein Sputw3181_3483 (Shewanella sp. (strain W3-18-1)).